Reading from the N-terminus, the 274-residue chain is 2-dehydro-3-deoxyphosphooctonate aldolase (274 aa).

The protein belongs to the KdsA family.

It localises to the cytoplasm. The catalysed reaction is D-arabinose 5-phosphate + phosphoenolpyruvate + H2O = 3-deoxy-alpha-D-manno-2-octulosonate-8-phosphate + phosphate. Its pathway is carbohydrate biosynthesis; 3-deoxy-D-manno-octulosonate biosynthesis; 3-deoxy-D-manno-octulosonate from D-ribulose 5-phosphate: step 2/3. It participates in bacterial outer membrane biogenesis; lipopolysaccharide biosynthesis. This is 2-dehydro-3-deoxyphosphooctonate aldolase from Rickettsia conorii (strain ATCC VR-613 / Malish 7).